Reading from the N-terminus, the 579-residue chain is Adipocyte plasma membrane-associated protein Hemomucin (579 aa).

Residues 1 to 6 are Cytoplasmic-facing; that stretch reads MGLLYA. The helical transmembrane segment at 7-29 threads the bilayer; it reads LRVRIMNFMIFFLLIILMPGLPP. Residues 30–579 are Extracellular-facing; that stretch reads RTTFPFKDYI…INKQGVNVEL (550 aa). 2 N-linked (GlcNAc...) asparagine glycosylation sites follow: Asn-213 and Asn-217. Positions 427 to 579 are disordered; the sequence is GLEASIGVPP…INKQGVNVEL (153 aa). Positions 435–529 are enriched in low complexity; that stretch reads PPSKATPKPK…PKPTTTTTPT (95 aa).

It belongs to the strictosidine synthase family. As to quaternary structure, interacts with sturkopf. Post-translationally, O-glycosylated. Glycosylated in the ovary of 4 day old females. Phosphorylated. In terms of tissue distribution, detected in ovaries (at protein level). In larvae, detected in the fat body, salivary glands, imaginal disks and gut (at protein level). In adults, expressed in the cardia, and in regions of the ventriculus including the area posterior to the cardia. In females also expressed in follicle cells.

Its subcellular location is the cell membrane. Transmembrane mucin that may be involved in cellular adhesion and the innate immune response. Membrane-tethered mucins are involved in many cell surface functions and form a physical barrier around cells to regulate cell-cell and/or cell-substrate interactions, and protect against pathogens or harmful extracellular conditions. This mucin likely acts in hemocyte adhesion as it is released from hemocytes during coagulation and is also able to bind lipophorin particles which form part of the hemocyte coagulogen. Able to induce expression of the antibacterial proteins in the presence of GalNAc-specific lectins and so probably also functions in the innate immune response. In Drosophila melanogaster (Fruit fly), this protein is Adipocyte plasma membrane-associated protein Hemomucin.